The primary structure comprises 351 residues: DNA polymerase IV (351 aa).

A UmuC domain is found at 4-185 (IIHVDMDCFF…LPLAKIPGVG (182 aa)). Mg(2+) contacts are provided by aspartate 8 and aspartate 103. Glutamate 104 is an active-site residue.

This sequence belongs to the DNA polymerase type-Y family. In terms of assembly, monomer. Mg(2+) serves as cofactor.

The protein localises to the cytoplasm. The catalysed reaction is DNA(n) + a 2'-deoxyribonucleoside 5'-triphosphate = DNA(n+1) + diphosphate. In terms of biological role, poorly processive, error-prone DNA polymerase involved in untargeted mutagenesis. Copies undamaged DNA at stalled replication forks, which arise in vivo from mismatched or misaligned primer ends. These misaligned primers can be extended by PolIV. Exhibits no 3'-5' exonuclease (proofreading) activity. May be involved in translesional synthesis, in conjunction with the beta clamp from PolIII. This is DNA polymerase IV from Salmonella paratyphi B (strain ATCC BAA-1250 / SPB7).